Here is a 55-residue protein sequence, read N- to C-terminus: MAKGIRDKIKLVSSAGTGHFYTTTKNKRTMPEKLEMKKFDPVVRQHVMYKEAKIK.

It belongs to the bacterial ribosomal protein bL33 family.

This is Large ribosomal subunit protein bL33 from Photorhabdus laumondii subsp. laumondii (strain DSM 15139 / CIP 105565 / TT01) (Photorhabdus luminescens subsp. laumondii).